The following is a 752-amino-acid chain: MTISPPEREEKKARVIVDNDPVPTSFERWAKPGHFDRSLARGPKTTTWIWNLHALAHDFDTHTSDLEDISRKIFSAHFGHLAVVMVWLSGMIFHGAKFSNYEAWLSDPLNVKPSAQVVWPIVGQDILNGDVGGGFHGIQITSGLFQVWRGWGITNSFQLYVTAIGGLVLAGLFLFAGWFHYHKRAPKLEWFQNVESMLNHHLQVLLGCGSLGWAGHLIHVSAPTNKLLDAGVALKDIPLPHEFILNKDLLTELYPSFAAGLAPFFTLNWGQYADFLTFKGGLNPVTGGLWMTDIAHHHLAIAVLFIVAGHQYRTNWGIGHSIREILENHKGPFTGEGHKGLYENLTTSWHAQLATNLAFLGSLTIIIAHHMYAMPPYPYLATDYATQLCIFTHHIWIGGFLIVGGAAHAAIFMVRDYDPVVNQNNVLDRVLRHRDAIISHLNWVCIFLGFHSFGLYIHNDTMRALGRPQDLFSDTGIQLQPVFAQWIQNIHALAPGTTAPNALEPVSYVFGGGILAVGGKVAAAPIALGTADFLIHHIHAFTIHVTVLILLKGVLYARSSRLIPDKANLGFRFPCDGPGRGGTCQVSGWDHVFLGLFWMYNSLSIVIFHFSWKMQSDVWGTVDADGTVTHITGGNFAQSAITINGWLRDFLWAQATQVINSYGSALSAYGLLFLGAHFVWAFSLMFLFSGRGYWQELIESIVWAHNKLKVAPAIQPRALSIIQGRAVGVAHYLLGGIATTWAFFHAHILSVG.

Transmembrane regions (helical) follow at residues 73-96 (IFSA…FHGA), 159-182 (LYVT…FHYH), 198-222 (LNHH…HVSA), 294-312 (IAHH…GHQY), 349-372 (WHAQ…HHMY), 388-414 (LCIF…IFMV), 436-458 (AIIS…LYIH), and 533-551 (FLIH…LILL). [4Fe-4S] cluster contacts are provided by C575 and C584. The next 2 membrane-spanning stretches (helical) occupy residues 591 to 612 (HVFL…HFSW) and 666 to 688 (LSAY…MFLF). H677 serves as a coordination point for chlorophyll a'. Residues M685 and Y693 each contribute to the chlorophyll a site. W694 provides a ligand contact to phylloquinone. Residues 726-746 (AVGVAHYLLGGIATTWAFFHA) form a helical membrane-spanning segment.

It belongs to the PsaA/PsaB family. The PsaA/B heterodimer binds the P700 chlorophyll special pair and subsequent electron acceptors. PSI consists of a core antenna complex that captures photons, and an electron transfer chain that converts photonic excitation into a charge separation. The cyanobacterial PSI reaction center is composed of one copy each of PsaA,B,C,D,E,F,I,J,K,L,M and X, and forms trimeric complexes. Requires PSI electron transfer chain: 5 chlorophyll a, 1 chlorophyll a', 2 phylloquinones and 3 4Fe-4S clusters. PSI core antenna: 90 chlorophyll a, 22 carotenoids, 3 phospholipids and 1 galactolipid. P700 is a chlorophyll a/chlorophyll a' dimer, A0 is one or more chlorophyll a, A1 is one or both phylloquinones and FX is a shared 4Fe-4S iron-sulfur center. as cofactor.

It localises to the cellular thylakoid membrane. It catalyses the reaction reduced [plastocyanin] + hnu + oxidized [2Fe-2S]-[ferredoxin] = oxidized [plastocyanin] + reduced [2Fe-2S]-[ferredoxin]. PsaA and PsaB bind P700, the primary electron donor of photosystem I (PSI), as well as the electron acceptors A0, A1 and FX. PSI is a plastocyanin/cytochrome c6-ferredoxin oxidoreductase, converting photonic excitation into a charge separation, which transfers an electron from the donor P700 chlorophyll pair to the spectroscopically characterized acceptors A0, A1, FX, FA and FB in turn. Oxidized P700 is reduced on the lumenal side of the thylakoid membrane by plastocyanin or cytochrome c6. The protein is Photosystem I P700 chlorophyll a apoprotein A1 of Nostoc punctiforme (strain ATCC 29133 / PCC 73102).